A 142-amino-acid chain; its full sequence is Probable pilin MJ0832.1 (142 aa).

Residues 1–8 constitute a propeptide that is removed on maturation; the sequence is MLKFRKRG. The short motif at 9–17 is the QXSXEXXXL element; that stretch reads QISLEFSLL.

In terms of processing, the N-terminus is cleaved by the prepilin peptidase EppA, which recognizes the class III signal sequence.

The protein resides in the secreted. The protein localises to the cell surface. Its subcellular location is the fimbrium. In Methanocaldococcus jannaschii (strain ATCC 43067 / DSM 2661 / JAL-1 / JCM 10045 / NBRC 100440) (Methanococcus jannaschii), this protein is Probable pilin MJ0832.1.